We begin with the raw amino-acid sequence, 91 residues long: uncharacterized protein (91 aa).

The next 3 helical transmembrane spans lie at 9 to 29 (VLWG…PFLP), 44 to 64 (LTVN…VFAW), and 71 to 91 (QFVF…CLAL).

It is found in the cell membrane. This is an uncharacterized protein from Bacillus subtilis (strain 168).